Reading from the N-terminus, the 90-residue chain is Acylphosphatase (90 aa).

An Acylphosphatase-like domain is found at 3-90 (QYRIIVDGRV…DGFQKFNISY (88 aa)). Catalysis depends on residues R18 and N36.

It belongs to the acylphosphatase family.

It carries out the reaction an acyl phosphate + H2O = a carboxylate + phosphate + H(+). In Bacillus licheniformis (strain ATCC 14580 / DSM 13 / JCM 2505 / CCUG 7422 / NBRC 12200 / NCIMB 9375 / NCTC 10341 / NRRL NRS-1264 / Gibson 46), this protein is Acylphosphatase (acyP).